Here is an 855-residue protein sequence, read N- to C-terminus: Axonemal dynein light chain domain-containing protein 1 (855 aa).

Residues 1–17 show a composition bias toward polar residues; that stretch reads MSLPKTPSTPLNSASTS. The interval 1-31 is disordered; it reads MSLPKTPSTPLNSASTSESKKLVSVATEGTR. Coiled-coil stretches lie at residues 316 to 402, 451 to 480, and 571 to 596; these read QRIL…WSSA, LQKLTQKWRNLVNKFKQEVEEMEESTRETL, and SERQYMEEIIKNIQKLYKEYEIRING.

It is found in the cytoplasm. May be essential for spermiogenesis and male fertility probably by regulating the manchette dynamics, spermatid head shaping and sperm flagellum assembly. The protein is Axonemal dynein light chain domain-containing protein 1 (AXDND1) of Macaca fascicularis (Crab-eating macaque).